The chain runs to 178 residues: MRRAFIELDRVKGCFFRRGKRKAKKLNSSGAFAFGSSYAGTYLLDKHSRRKNNLYLRSFFFFKFYYCNLFNFNPGFIGAFYHTRPGVFFLDHFFFFNNFLEIPSFFENAAEAEPAQLMGHLVQDCAAQTTGRGLVNFERGLVDSKPKFLDAFFGLLSLKRTTNRFGILFFLIFCLRRA.

The protein localises to the mitochondrion. This is an uncharacterized protein from Paramecium tetraurelia.